Consider the following 346-residue polypeptide: Dehydrogenase azaJ (346 aa).

43–48 (VDYATQ) provides a ligand contact to NADP(+). 133–140 (LAFSTAIV) is a binding site for substrate. Residues 170-173 (ATSV), 193-196 (SPHN), tyrosine 211, and 251-252 (LN) each bind NADP(+). 269–273 (APPNV) is a binding site for substrate. NADP(+) is bound at residue 336 to 337 (VS).

Belongs to the zinc-containing alcohol dehydrogenase family.

It participates in secondary metabolite biosynthesis. Its function is as follows. Dehydrogenase; part of the gene cluster that mediates the biosynthesis of azaphilones, a class of fungal metabolites characterized by a highly oxygenated pyrano-quinone bicyclic core and exhibiting a broad range of bioactivities. In the first step, the non-reducing polyketide synthase azaA forms the hexaketide precursor from successive condensations of five malonyl-CoA units, presumably with a simple acetyl-CoA starter unit. The reactive polyketide chain then undergoes a PT-mediated C2-C7 cyclization to afford the aromatic ring and is eventually released as an aldehyde through the R-domain. The putative ketoreductase azaE is proposed to catalyze the reduction of the terminal ketone resulting in the early culture product FK17-P2a. The monooxygenase azaH was demonstrated to be the only enzyme required to convert FK17-P2a to azanigerone E. AzaH first hydroxylates the benzaldehyde intermediate FK17-P2a at C4, which triggers the formation of the pyran-ring to afford azanigerone E. In parallel, the 2,4-dimethylhexanoyl chain is synthesized by the HR-PKS azaB and is proposed to be transferred to the C4-hydroxyl of azanigerone E by the acyltransferase azaD directly from the ACP domain of azaB. Alternatively, the 2,4-dimethyl-hexanoyl chain may be offloaded from the HR-PKS as a carboxylic acid and converted to an acyl-CoA by azaF. The resulting acyl-CoA molecule could then be taken up as a substrate by AzaD to form azanigerone B. To yield the carboxylic acid substituent in azanigerone A, the hydroxypropyl side chain of azanigerone B would need to undergo a C-C oxidative cleavage catalyzed by cytochrome P450 AzaI. AzaI is proposed to act on a vicinal diol that leads to a C-C bond scission either through an alkoxyradical intermediate or a peroxy complex. In the biosynthesis of azanigerone A, azanigerone B first undergoes hydroxylation at C10, possibly catalyzed by one of the two FAD-dependent monooxygenases encoded in the cluster, azaG or azaL, resulting in the vicinal diol azanigerone C. Oxidative cleavage of azanigerone C by azaI would yield the corresponding aldehyde derivative of azanigerone A. Finally, the dehydrogenase azaJ is proposed to convert the aldehyde functional group into the carboxylic acid, completing the conversion from azanigerone B to azanigerone A. Alternatively, the oxidation of aldehyde to carboxylic acid may be catalyzed by the same P450 enzyme azaI via consecutive oxidation or by endogenous alcohol dehydrogenase. This is Dehydrogenase azaJ from Aspergillus niger (strain ATCC 1015 / CBS 113.46 / FGSC A1144 / LSHB Ac4 / NCTC 3858a / NRRL 328 / USDA 3528.7).